The following is a 415-amino-acid chain: Methylthioribose-1-phosphate isomerase (415 aa).

The active-site Proton donor is Asp284.

This sequence belongs to the eIF-2B alpha/beta/delta subunits family. MtnA subfamily.

It is found in the cytoplasm. Its subcellular location is the nucleus. The enzyme catalyses 5-(methylsulfanyl)-alpha-D-ribose 1-phosphate = 5-(methylsulfanyl)-D-ribulose 1-phosphate. It participates in amino-acid biosynthesis; L-methionine biosynthesis via salvage pathway; L-methionine from S-methyl-5-thio-alpha-D-ribose 1-phosphate: step 1/6. Functionally, catalyzes the interconversion of methylthioribose-1-phosphate (MTR-1-P) into methylthioribulose-1-phosphate (MTRu-1-P). The sequence is that of Methylthioribose-1-phosphate isomerase from Candida glabrata (strain ATCC 2001 / BCRC 20586 / JCM 3761 / NBRC 0622 / NRRL Y-65 / CBS 138) (Yeast).